A 209-amino-acid polypeptide reads, in one-letter code: Streptogramin A acetyltransferase (209 aa).

Residue His-82 is part of the active site.

It belongs to the transferase hexapeptide repeat family. In terms of assembly, homohexamer.

Inactivates the A compounds of streptogramin antibiotics by acetylation, thus providing resistance to these antibiotics. The chain is Streptogramin A acetyltransferase (vatD) from Enterococcus faecium (Streptococcus faecium).